The sequence spans 493 residues: MDFDEVLEKYDPVMGLEVHVELGTETKMFSASSAHFGAEPNSNVDPVSLGLPGALPVVNAKGVEWAIKIGLALNCSIAESSRFARKNYFYPDQPKNYQISQYDEPIAYDGYLDVVLEDGTEWRVEIERAHMEEDTGKLTHLGGTSGRIHGATASLVDCNRAGVPLIEVVTKPIEGAGARAPEIAKAYVSALRDLVKALGVSDGRLDQGSMRVDANLSLRPIGQEEFGTRTETKNINSLKSVEQAITFEMQRQAQVLDDGGVIDQETRHYQEADGSTSKGRPKETAEDYRYFNDPDLPPVIAPREWVEEIRATLPELPWVRRARIQEEWKLSDAEMRDLINANALDLIIETVEAGTTPDEARAWWVSYISQKANESGVELDALGVAPAHVARVVALVSEGKLTNKLARQAIDGVIAGEGDVDAVVAARGLEVVRDDGAIEKAVDDALAANPDIVEKYRAGNTKVTGAIVGAVMKATRGKADPAQVNQLIAKKLA.

The interval His-268–Phe-291 is disordered. A compositionally biased stretch (basic and acidic residues) spans Arg-280–Phe-291.

This sequence belongs to the GatB/GatE family. GatB subfamily. Heterotrimer of A, B and C subunits.

It catalyses the reaction L-glutamyl-tRNA(Gln) + L-glutamine + ATP + H2O = L-glutaminyl-tRNA(Gln) + L-glutamate + ADP + phosphate + H(+). It carries out the reaction L-aspartyl-tRNA(Asn) + L-glutamine + ATP + H2O = L-asparaginyl-tRNA(Asn) + L-glutamate + ADP + phosphate + 2 H(+). Allows the formation of correctly charged Asn-tRNA(Asn) or Gln-tRNA(Gln) through the transamidation of misacylated Asp-tRNA(Asn) or Glu-tRNA(Gln) in organisms which lack either or both of asparaginyl-tRNA or glutaminyl-tRNA synthetases. The reaction takes place in the presence of glutamine and ATP through an activated phospho-Asp-tRNA(Asn) or phospho-Glu-tRNA(Gln). This chain is Aspartyl/glutamyl-tRNA(Asn/Gln) amidotransferase subunit B, found in Corynebacterium glutamicum (strain ATCC 13032 / DSM 20300 / JCM 1318 / BCRC 11384 / CCUG 27702 / LMG 3730 / NBRC 12168 / NCIMB 10025 / NRRL B-2784 / 534).